Consider the following 150-residue polypeptide: Large ribosomal subunit protein uL15 (150 aa).

The tract at residues 1 to 60 (MKLSDLRPNPGANKRRKRVGRGPGSGHGKTATRGHKGQKSRSGGLKDPRRFEGGRSTTLM) is disordered. Over residues 30 to 39 (TATRGHKGQK) the composition is skewed to basic residues. Basic and acidic residues predominate over residues 44–53 (GLKDPRRFEG).

Belongs to the universal ribosomal protein uL15 family. In terms of assembly, part of the 50S ribosomal subunit.

Its function is as follows. Binds to the 23S rRNA. The protein is Large ribosomal subunit protein uL15 of Thermus thermophilus (strain ATCC BAA-163 / DSM 7039 / HB27).